A 249-amino-acid polypeptide reads, in one-letter code: Homeobox protein TGIF2LX (249 aa).

Disordered stretches follow at residues 1–62 and 126–192; these read MEAA…KRKG and DPIV…KLTV. Residues 9-27 show a composition bias toward basic and acidic residues; sequence AETRSRVEKDSRRAKKDSP. Residues 28 to 46 show a composition bias toward polar residues; it reads AKTQSPAQDTSIMLRNNAD. Positions 55 to 118 form a DNA-binding region, homeobox; TALE-type; it reads EHKKKRKGYL…INARRRILPD (64 aa). Over residues 159 to 172 the composition is skewed to polar residues; it reads DNVQSLPLRSSPKG.

Belongs to the TALE/TGIF homeobox family.

The protein resides in the nucleus. May have a transcription role in testis. The sequence is that of Homeobox protein TGIF2LX (TGIF2LX) from Macaca fascicularis (Crab-eating macaque).